A 193-amino-acid polypeptide reads, in one-letter code: dCTP deaminase (193 aa).

DCTP is bound by residues 110 to 115, aspartate 128, 136 to 138, tyrosine 171, lysine 178, and glutamine 182; these read RSSLAR and VLE. Glutamate 138 (proton donor/acceptor) is an active-site residue.

It belongs to the dCTP deaminase family. In terms of assembly, homotrimer.

It catalyses the reaction dCTP + H2O + H(+) = dUTP + NH4(+). It functions in the pathway pyrimidine metabolism; dUMP biosynthesis; dUMP from dCTP (dUTP route): step 1/2. Its function is as follows. Catalyzes the deamination of dCTP to dUTP. In Buchnera aphidicola subsp. Acyrthosiphon pisum (strain APS) (Acyrthosiphon pisum symbiotic bacterium), this protein is dCTP deaminase.